Reading from the N-terminus, the 398-residue chain is 1-deoxy-D-xylulose 5-phosphate reductoisomerase (398 aa).

Residues threonine 10, glycine 11, serine 12, isoleucine 13, glycine 36, arginine 37, asparagine 38, and asparagine 124 each contribute to the NADPH site. Lysine 125 is a binding site for 1-deoxy-D-xylulose 5-phosphate. Residue glutamate 126 participates in NADPH binding. Aspartate 150 contributes to the Mn(2+) binding site. The 1-deoxy-D-xylulose 5-phosphate site is built by serine 151, glutamate 152, serine 186, and histidine 209. Residue glutamate 152 participates in Mn(2+) binding. Glycine 215 contributes to the NADPH binding site. 1-deoxy-D-xylulose 5-phosphate-binding residues include serine 222, asparagine 227, lysine 228, and glutamate 231. Glutamate 231 is a Mn(2+) binding site.

It belongs to the DXR family. As to quaternary structure, homodimer. Mg(2+) is required as a cofactor. Mn(2+) serves as cofactor.

The enzyme catalyses 2-C-methyl-D-erythritol 4-phosphate + NADP(+) = 1-deoxy-D-xylulose 5-phosphate + NADPH + H(+). The protein operates within isoprenoid biosynthesis; isopentenyl diphosphate biosynthesis via DXP pathway; isopentenyl diphosphate from 1-deoxy-D-xylulose 5-phosphate: step 1/6. Functionally, catalyzes the NADPH-dependent rearrangement and reduction of 1-deoxy-D-xylulose-5-phosphate (DXP) to 2-C-methyl-D-erythritol 4-phosphate (MEP). The chain is 1-deoxy-D-xylulose 5-phosphate reductoisomerase from Yersinia pseudotuberculosis serotype O:1b (strain IP 31758).